The primary structure comprises 574 residues: Interactor of HORMAD1 protein 1 (574 aa).

The segment at 113–133 is disordered; the sequence is GLSKQFEEKKRRATDQSDSET. Positions 117 to 127 are enriched in basic and acidic residues; that stretch reads QFEEKKRRATD. The stretch at 217–240 forms a coiled coil; it reads MEMKSTLKNLEVLVVEQTKNLQQF. 3 disordered regions span residues 267–324, 372–393, and 426–457; these read GHLK…GVWD, FSNLPSQRAGNGQGLMAQGASQ, and TEQKGRPCRKRRRGKKQQPQRSKRGGLLDRKQ. Positions 272 to 284 are enriched in low complexity; that stretch reads STSQTSPSLTQSL. A compositionally biased stretch (polar residues) spans 372-381; the sequence is FSNLPSQRAG. The segment covering 431 to 449 has biased composition (basic residues); that stretch reads RPCRKRRRGKKQQPQRSKR. Ser-476, Ser-569, and Ser-570 each carry phosphoserine.

As to quaternary structure, part of the MCD recombinosome complex, at least composed of IHO1, REC114 and MEI4. Interacts with REC114. Interacts with MEI4. Interacts with HORMAD1. Interacts with ANKRD31. In terms of tissue distribution, detected in spermatocytes and testis (at protein level).

It localises to the chromosome. In terms of biological role, required for DNA double-strand breaks (DSBs) formation in unsynapsed regions during meiotic recombination. Probably acts by forming a complex with MEI4 and REC114, which activates DSBs formation in unsynapsed regions, an essential step to ensure completion of synapsis. Not required for HORMAD1 functions in pairing-independent synaptonemal complex formation, ATR recruitment to unsynapsed axes, meiotic silencing of unsynapsed chromatin (MSUC) or meiotic surveillance. The polypeptide is Interactor of HORMAD1 protein 1 (Mus musculus (Mouse)).